The chain runs to 197 residues: CASP-like protein 1B2 (197 aa).

Ala2 is subject to N-acetylalanine. The Cytoplasmic segment spans residues 2–17 (AREKIVVAGGTTKSWK). The helical transmembrane segment at 18 to 38 (LLLGLRIFAFMATLAAAIVMS) threads the bilayer. Topologically, residues 39–69 (LNKETKTLVVATIGTVPIKATLTAKFQHTPA) are extracellular. Residues 70–90 (FVFFVIANVMVSFHNLLMIVV) traverse the membrane as a helical segment. The Cytoplasmic segment spans residues 91–106 (QIFSRKLEYKGLRLLS). The chain crosses the membrane as a helical span at residues 107 to 127 (IAILDMLNATLVSAAANAAVF). The Extracellular segment spans residues 128–156 (VAELGKNGNKHAKWNKVCDRFTTYCDHGA). Residues 157-177 (GAIIAAFAGVILMLLVSAVSI) form a helical membrane-spanning segment. Over 178–197 (SRLLINSKNFSTTATTTSVV) the chain is Cytoplasmic.

It belongs to the Casparian strip membrane proteins (CASP) family. Homodimer and heterodimers.

The protein localises to the cell membrane. The sequence is that of CASP-like protein 1B2 from Arabidopsis thaliana (Mouse-ear cress).